A 548-amino-acid polypeptide reads, in one-letter code: Probable malate:quinone oxidoreductase (548 aa).

Positions 521-548 (DKPQAADSTPKPQLKPQPVQKEVADIAL) are disordered. Residues 530-541 (PKPQLKPQPVQK) show a composition bias toward low complexity.

This sequence belongs to the MQO family. FAD serves as cofactor.

It catalyses the reaction (S)-malate + a quinone = a quinol + oxaloacetate. The protein operates within carbohydrate metabolism; tricarboxylic acid cycle; oxaloacetate from (S)-malate (quinone route): step 1/1. This Shigella boydii serotype 4 (strain Sb227) protein is Probable malate:quinone oxidoreductase.